The following is a 194-amino-acid chain: MPNWGGGAKCGACEKTVYHAEEIQCNGRSFHKTCFHCMACRKALDSTTVAAHESEIYCKVCYGRRYGPKGIGYGQGAGCLSTDTGEHLGLQFQQSPKPARSVTTSNPSKFTAKFGESEKCPRCGKSVYAAEKVMGGGKPWHKTCFRCAICGKSLESTNVTDKDGELYCKVCYAKNFGPTGIGFGGLTQQVEKKE.

The tract at residues 1-5 (MPNWG) is interaction with TCAP. Positions 10 to 61 (CGACEKTVYHAEEIQCNGRSFHKTCFHCMACRKALDSTTVAAHESEIYCKVC) constitute an LIM zinc-binding 1 domain. Residues 64–69 (RRYGPK) carry the Nuclear localization signal motif. Residues 94–105 (QSPKPARSVTTS) are interaction with CLF2 and isoform 2. A phosphoserine mark is found at Ser95 and Ser153. Residues 120-171 (CPRCGKSVYAAEKVMGGGKPWHKTCFRCAICGKSLESTNVTDKDGELYCKVC) enclose the LIM zinc-binding 2 domain.

In terms of assembly, self-associates. Oligomeric in the cytoplasm and monomeric in the nucleus. Homooligomers preferentially form along the actin cytoskeleton. Isoform 2 interacts with isoform 1. Isoform 1 but not isoform 2 interacts with MYOD1 and MYOG. Isoform 1 interacts with TCAP, ACTN2 and NRAP. Isoform 2 interacts with TCAP and alpha-actinin. Interacts with LDHD. Interacts (via N-terminus)with GLRX3 (via C-terminus) and PPP3CA; GLRX3 and calcineurin compete for interaction with CSRP3. Interacts with MYF6. Interacts with CFL2; the stoichiometry influences F-actin depolymerization and possibly two molecules of CFL2 can interact with one molecule of CSRP3 resulting in the highest functional impact; the interaction is stronger with phosphorylated CFL2. Post-translationally, phosphorylated by PKC/PRKCA. Cardiac and slow-twitch skeletal muscles. Isoform 2 is expressed in striated muscle. Isoform 2 is specifically expressed at higher levels in patients with neuromuscular diseases, such as limb-girdle muscular dystrophy 2A (LGMD2A), Duchenne muscular dystrophy (DMD) and dermatomyositis.

The protein localises to the nucleus. Its subcellular location is the cytoplasm. It is found in the cytoskeleton. It localises to the myofibril. The protein resides in the sarcomere. The protein localises to the z line. Positive regulator of myogenesis. Acts as a cofactor for myogenic bHLH transcription factors such as MYOD1, and probably MYOG and MYF6. Enhances the DNA-binding activity of the MYOD1:TCF3 isoform E47 complex and may promote formation of a functional MYOD1:TCF3 isoform E47:MEF2A complex involved in myogenesis. Plays a crucial and specific role in the organization of cytosolic structures in cardiomyocytes. Could play a role in mechanical stretch sensing. May be a scaffold protein that promotes the assembly of interacting proteins at Z-line structures. It is essential for calcineurin anchorage to the Z line. Required for stress-induced calcineurin-NFAT activation. The role in regulation of cytoskeleton dynamics by association with CFL2 is reported conflictingly: Shown to enhance CFL2-mediated F-actin depolymerization dependent on the CSRP3:CFL2 molecular ratio, and also shown to reduce the ability of CLF1 and CFL2 to enhance actin depolymerization. Proposed to contribute to the maintenance of muscle cell integrity through an actin-based mechanism. Can directly bind to actin filaments, cross-link actin filaments into bundles without polarity selectivity and protect them from dilution- and cofilin-mediated depolymerization; the function seems to involve its self-association. In vitro can inhibit PKC/PRKCA activity. Proposed to be involved in cardiac stress signaling by down-regulating excessive PKC/PRKCA signaling. Functionally, may play a role in early sarcomere organization. Overexpression in myotubes negatively regulates myotube differentiation. By association with isoform 1 and thus changing the CSRP3 isoform 1:CFL2 stoichiometry is proposed to down-regulate CFL2-mediated F-actin depolymerization. In Homo sapiens (Human), this protein is Cysteine and glycine-rich protein 3 (CSRP3).